The primary structure comprises 129 residues: MKPQLIAFKKFLQTEFQAVDFETFRINFNLCLKREQDNIVIYEDDDYDDQPFFFKPMLSDGFFIQTEVIKQLDYLAKVVENPKDSDQQCCQNFYEALIVFISALAITKGINPNRFHQRLVNRFAIHAVY.

This is an uncharacterized protein from Mycoplasma genitalium (strain ATCC 33530 / DSM 19775 / NCTC 10195 / G37) (Mycoplasmoides genitalium).